The following is an 88-amino-acid chain: Beta-insect excitatory toxin LqhIT1b (88 aa).

Positions 1 to 18 (MKFFLLFLVVLPIMGVLG) are cleaved as a signal peptide. Residues 20–83 (KNGYAVDSKG…ISDTTKKYCD (64 aa)) form the LCN-type CS-alpha/beta domain. 4 cysteine pairs are disulfide-bonded: C34–C55, C40–C60, C44–C62, and C56–C82.

The protein belongs to the long (4 C-C) scorpion toxin superfamily. Sodium channel inhibitor family. Beta subfamily. Expressed by the venom gland.

Its subcellular location is the secreted. Excitatory insect toxins induce a spastic paralysis. They bind voltage-independently at site-4 of sodium channels (Nav) and shift the voltage of activation toward more negative potentials thereby affecting sodium channel activation and promoting spontaneous and repetitive firing. This is Beta-insect excitatory toxin LqhIT1b from Leiurus hebraeus (Hebrew deathstalker scorpion).